The chain runs to 106 residues: U1-lycotoxin-Ls1b (106 aa).

A signal peptide spans methionine 1–serine 19. Positions glutamate 20 to arginine 40 are excised as a propeptide. Cystine bridges form between cysteine 43/cysteine 58, cysteine 50/cysteine 67, cysteine 57/cysteine 85, and cysteine 69/cysteine 83.

Belongs to the neurotoxin 19 (CSTX) family. 04 (U1-Lctx) subfamily. In terms of tissue distribution, expressed by the venom gland.

The protein localises to the secreted. This is U1-lycotoxin-Ls1b from Lycosa singoriensis (Wolf spider).